Consider the following 528-residue polypeptide: Proteinaceous RNase P 2 (528 aa).

Basic and acidic residues predominate over residues 1–16 (MAASDQHRSRRHDESS). Residues 1 to 28 (MAASDQHRSRRHDESSSRPNKKKKVSRN) are disordered. 4 PPR repeats span residues 29–64 (PETN…EVRL), 72–107 (LLYL…GISP), 108–142 (NEAS…GGVS), and 145–179 (RLRT…GIAL). Positions 275–511 (VSSTGRCLSC…NEESSRTWMC (237 aa)) constitute a PRORP domain. The Zn(2+) site is built by Cys281 and Cys284. Asp343, Asp421, Asp422, and Asp440 together coordinate Mg(2+). Zn(2+)-binding residues include His494 and Cys511.

Belongs to the PPR family. P subfamily. As to quaternary structure, monomer; forms dimers in crystallo but monomers in solution. Requires Mg(2+) as cofactor.

Its subcellular location is the nucleus. It carries out the reaction Endonucleolytic cleavage of RNA, removing 5'-extranucleotides from tRNA precursor.. Its function is as follows. Endonuclease RNase P responsible for the 5' maturation of tRNA precursors. Preferentially binds precursor tRNAs containing short 5' leaders and 3' trailers. Also involved in the maturation of mRNA and small nucleolar RNA (snoRNA). The chain is Proteinaceous RNase P 2 (PRORP2) from Arabidopsis thaliana (Mouse-ear cress).